Consider the following 329-residue polypeptide: Octaprenyl diphosphate synthase (329 aa).

Residues Lys-51, Arg-54, and His-83 each contribute to the isopentenyl diphosphate site. Mg(2+)-binding residues include Asp-90 and Asp-94. An an all-trans-polyprenyl diphosphate-binding site is contributed by Arg-99. Arg-100 serves as a coordination point for isopentenyl diphosphate. Residues Lys-176, Thr-177, and Gln-214 each coordinate an all-trans-polyprenyl diphosphate.

Belongs to the FPP/GGPP synthase family. Requires Mg(2+) as cofactor.

It catalyses the reaction 5 isopentenyl diphosphate + (2E,6E)-farnesyl diphosphate = all-trans-octaprenyl diphosphate + 5 diphosphate. Its function is as follows. Supplies octaprenyl diphosphate, the precursor for the side chain of the isoprenoid quinones ubiquinone and menaquinone. In Haemophilus influenzae (strain ATCC 51907 / DSM 11121 / KW20 / Rd), this protein is Octaprenyl diphosphate synthase (ispB).